The primary structure comprises 151 residues: S-protein homolog 27 (151 aa).

Asn-91 and Asn-123 each carry an N-linked (GlcNAc...) asparagine glycan.

The protein belongs to the plant self-incompatibility (S1) protein family.

Its subcellular location is the secreted. This is S-protein homolog 27 from Arabidopsis thaliana (Mouse-ear cress).